The primary structure comprises 264 residues: Protein FAM228B (264 aa).

This sequence belongs to the FAM228 family.

In Bos taurus (Bovine), this protein is Protein FAM228B (FAM228B).